The chain runs to 940 residues: Valine--tRNA ligase (940 aa).

A 'HIGH' region motif is present at residues 47–57 (PNVTGILHMGH). Residues 564-568 (KLSKS) carry the 'KMSKS' region motif. ATP is bound at residue Lys567. A coiled-coil region spans residues 872–938 (PIEQITKEKN…LQSILDKLAS (67 aa)).

It belongs to the class-I aminoacyl-tRNA synthetase family. ValS type 1 subfamily. Monomer.

Its subcellular location is the cytoplasm. It catalyses the reaction tRNA(Val) + L-valine + ATP = L-valyl-tRNA(Val) + AMP + diphosphate. Functionally, catalyzes the attachment of valine to tRNA(Val). As ValRS can inadvertently accommodate and process structurally similar amino acids such as threonine, to avoid such errors, it has a 'posttransfer' editing activity that hydrolyzes mischarged Thr-tRNA(Val) in a tRNA-dependent manner. The chain is Valine--tRNA ligase from Chlamydia felis (strain Fe/C-56) (Chlamydophila felis).